The following is a 356-amino-acid chain: Surface presentation of antigens protein SpaS (356 aa).

Transmembrane regions (helical) follow at residues 29-49, 72-92, 132-152, 179-199, and 261-281; these read LIIA…GSFN, LAVF…CLVC, VKDT…AIIC, LLAL…LDAI, and HITI…ISVY.

The protein belongs to the type III secretion exporter family.

It is found in the cell inner membrane. Functionally, involved in a secretory pathway responsible for the surface presentation of determinants needed for the entry of Salmonella species into mammalian cells. The polypeptide is Surface presentation of antigens protein SpaS (spaS) (Salmonella typhimurium (strain LT2 / SGSC1412 / ATCC 700720)).